The primary structure comprises 462 residues: Argininosuccinate lyase (462 aa).

Belongs to the lyase 1 family. Argininosuccinate lyase subfamily.

The protein resides in the cytoplasm. The enzyme catalyses 2-(N(omega)-L-arginino)succinate = fumarate + L-arginine. Its pathway is amino-acid biosynthesis; L-arginine biosynthesis; L-arginine from L-ornithine and carbamoyl phosphate: step 3/3. The polypeptide is Argininosuccinate lyase (Bacillus cereus (strain AH820)).